We begin with the raw amino-acid sequence, 94 residues long: Neutrophil defensin 1 (94 aa).

Residues 1-19 form the signal peptide; the sequence is MRTLAILAAILLVALQAQA. The propeptide occupies 20-38; sequence EPLQARADEVAAAPEQIAA. Cystine bridges form between Cys66–Cys94, Cys68–Cys83, and Cys73–Cys93. Arg78 carries the ADP-ribosylarginine; by ART1 modification. Residue Tyr85 is modified to Phosphotyrosine. Arg88 is modified (ADP-ribosylarginine; by ART1).

The protein belongs to the alpha-defensin family. In terms of assembly, tetramer. Dimer. Interacts with RETN. As to quaternary structure, (Microbial infection) Interacts with HIV-1 surface protein gp120. (Microbial infection) Interacts with herpes virus 1 (HHV1) envelope glycoprotein B; this interaction inhibits viral infection. In terms of processing, ADP-ribosylation drastically reduces cytotoxic and antibacterial activities, and enhances IL8 production. Post-translationally, phosphorylation at Tyr-85 has been found in some cancer cell lines, and interferes with ADP-ribosylation.

It is found in the secreted. In terms of biological role, effector molecule of the innate immune system that acts via antibiotic-like properties against a broad array of infectious agents including bacteria, fungi, and viruses or by promoting the activation and maturation of some APCs. Interacts with the essential precursor of cell wall synthesis lipid II to inhibit bacterial cell wall synthesis. Inhibits adenovirus infection via inhibition of viral disassembly at the vertex region, thereby restricting the release of internal capsid protein pVI, which is required for endosomal membrane penetration during cell entry. In addition, interaction with adenovirus capsid leads to the redirection of viral particles to TLR4 thereby promoting a NLRP3-mediated inflammasome response and interleukin 1-beta (IL-1beta) release. Induces the production of proinflammatory cytokines including type I interferon (IFN) in plasmacytoid dendritic cells (pDCs) by triggering the degradation of NFKBIA and nuclear translocation of IRF1, both of which are required for activation of pDCs. In Homo sapiens (Human), this protein is Neutrophil defensin 1 (DEFA1).